Consider the following 220-residue polypeptide: Redox-sensing transcriptional repressor Rex (220 aa).

The H-T-H motif DNA-binding region spans L17–F56. G91–G96 contacts NAD(+).

This sequence belongs to the transcriptional regulatory Rex family. Homodimer.

The protein resides in the cytoplasm. Modulates transcription in response to changes in cellular NADH/NAD(+) redox state. The polypeptide is Redox-sensing transcriptional repressor Rex (Roseiflexus sp. (strain RS-1)).